The chain runs to 328 residues: UPF0194 membrane protein YE2891 (328 aa).

Positions 1-22 (MNRKKIIVAVVIVALLAAIGYG) are cleaved as a signal peptide. 2 coiled-coil regions span residues 80–109 (YVNA…REEE) and 139–208 (ANKA…TTLL).

The protein belongs to the UPF0194 family.

The protein resides in the periplasm. The sequence is that of UPF0194 membrane protein YE2891 from Yersinia enterocolitica serotype O:8 / biotype 1B (strain NCTC 13174 / 8081).